A 265-amino-acid chain; its full sequence is Mlc titration factor A (265 aa).

Residues His-111, His-148, His-152, and Glu-211 each coordinate Zn(2+).

It belongs to the MtfA family. In terms of assembly, interacts with Mlc. The cofactor is Zn(2+).

The protein resides in the cytoplasm. In terms of biological role, involved in the modulation of the activity of the glucose-phosphotransferase system (glucose-PTS). Interacts with the transcriptional repressor Mlc, preventing its interaction with DNA and leading to the modulation of expression of genes regulated by Mlc, including ptsG, which encodes the PTS system glucose-specific EIICB component. Its function is as follows. Shows zinc-dependent metallopeptidase activity. The chain is Mlc titration factor A from Enterobacter sp. (strain 638).